We begin with the raw amino-acid sequence, 573 residues long: MTQISRQQYADLYGPTIGDKIRLGDSDLYVEIEKDLRATYGDELQYGGGKTLRDGMGSENFLTQEAGCLDLVITNVTVIDAIQGVVKADVGIRNGRIVGLGKAGNPSTMDGVTRGLVTGASTDAISGEHLILTAGGMDTHVHYIAPQQVEAALSNGITTLWGGGIGPVDGTNGVTTTNGPWNLEMMLRSIEGLPINFGIQGKGNSTGIAPLIEHLEAGAAGFKVHEDYGATPAAIRACLSVADEYDVSVAVHTDTLNESGYVEDTIAAFDGRSVHTYHSEGAGGGHAPDLLKVVGQNNILPSSTNPTLPCGKNSVAELFDMIMVCHNLNPKIPSDVAFAESRVRAETIVAESVLHDMGAISMIGSDSQAMGRIGETFLRAIQTADAMKKARGPLPEDAPGNDNFRVLRYIAKVTINPALTAGVGDVIGSIESGKFADLVLWEPAFFGVKPKLVLKGGLVAWANMGDPNASLPTPQPMYYRPMFAAYGSALQKTSITFVSRAAYDKGVADRFGLQRLVMPVSGTRVIGKAHMVRNSYLPNIEVDPQTFAVKVDGVHATVKPPQSISLNQLYFFS.

In terms of domain architecture, Urease spans 135–573 (GGMDTHVHYI…ISLNQLYFFS (439 aa)). The Ni(2+) site is built by H140, H142, and K223. K223 is modified (N6-carboxylysine). Residue H225 participates in substrate binding. Ni(2+) contacts are provided by H252 and H278. H326 functions as the Proton donor in the catalytic mechanism. A Ni(2+)-binding site is contributed by D366.

This sequence belongs to the metallo-dependent hydrolases superfamily. Urease alpha subunit family. Heterotrimer of UreA (gamma), UreB (beta) and UreC (alpha) subunits. Three heterotrimers associate to form the active enzyme. Requires Ni cation as cofactor. In terms of processing, carboxylation allows a single lysine to coordinate two nickel ions.

The protein resides in the cytoplasm. The enzyme catalyses urea + 2 H2O + H(+) = hydrogencarbonate + 2 NH4(+). It functions in the pathway nitrogen metabolism; urea degradation; CO(2) and NH(3) from urea (urease route): step 1/1. Disrupting the ure2 operon has no effect on urease activity, or pathogen survival in BALB/c mice when inoculated by gavage, but confers slightly enhanced resistance to low pH killing in vitro. This Brucella suis biovar 1 (strain 1330) protein is Urease subunit alpha 2.